The primary structure comprises 817 residues: Lon protease (817 aa).

A Lon N-terminal domain is found at 44–239 (LPILPLRNTV…ETLRYMNVEL (196 aa)). 390 to 397 (GPPGVGKT) contacts ATP. In terms of domain architecture, Lon proteolytic spans 626–807 (NDVAGVVTGL…SEVLAIALTD (182 aa)). Catalysis depends on residues S713 and K756.

The protein belongs to the peptidase S16 family. In terms of assembly, homohexamer. Organized in a ring with a central cavity.

The protein localises to the cytoplasm. The catalysed reaction is Hydrolysis of proteins in presence of ATP.. Its function is as follows. ATP-dependent serine protease that mediates the selective degradation of mutant and abnormal proteins as well as certain short-lived regulatory proteins. Required for cellular homeostasis and for survival from DNA damage and developmental changes induced by stress. Degrades polypeptides processively to yield small peptide fragments that are 5 to 10 amino acids long. Binds to DNA in a double-stranded, site-specific manner. The sequence is that of Lon protease from Flavobacterium johnsoniae (strain ATCC 17061 / DSM 2064 / JCM 8514 / BCRC 14874 / CCUG 350202 / NBRC 14942 / NCIMB 11054 / UW101) (Cytophaga johnsonae).